Here is a 951-residue protein sequence, read N- to C-terminus: Zinc fingers and homeoboxes protein 3 (951 aa).

The disordered stretch occupies residues 1–66 (MASKRKSTTP…SSTDGSALAN (66 aa)). The required for nuclear localization stretch occupies residues 1–107 (MASKRKSTTP…SEHTDFNKDP (107 aa)). Residues 42 to 58 (PSEAPDASSEAAPNPSS) are compositionally biased toward low complexity. 2 C2H2-type zinc fingers span residues 77 to 100 (YCCKECEFRSQDVTHFIGHMNSEH) and 109 to 132 (FVCTGCSFLAKNPEGLSLHNAKCH). A disordered region spans residues 227–252 (TFINGAAPGSQASAKSTKPPPAANGP). Residues 238–483 (ASAKSTKPPP…LLTACPSITS (246 aa)) are required for homodimerization and interaction with NFYA. The interval 299–497 (LSSIPTYNAA…DANIYKNKKS (199 aa)) is required for repressor activity. DNA-binding regions (homeobox) lie at residues 300-359 (SSIP…GISW) and 489-548 (ANIY…RNLK). The required for nuclear localization stretch occupies residues 492 to 550 (YKNKKSHEQLSALKGSFCRNQFPGQSEVEHLTKVTGLSTREVRKWFSDRRYHCRNLKGS). S599 carries the phosphoserine modification. The segment at residues 607-666 (TPTKYKERAPEQLRVLENSFAQNPLPPEEELDRLRSETKMTRREIDGWFSERRKKVNTEE) is a DNA-binding region (homeobox 3). Positions 662–676 (VNTEETKKADGHMPK) are enriched in basic and acidic residues. Residues 662–690 (VNTEETKKADGHMPKEEEEGAEQEGRDEE) form a disordered region. Over residues 677 to 690 (EEEEGAEQEGRDEE) the composition is skewed to acidic residues. A phosphoserine mark is found at S703 and S718. 2 DNA-binding regions (homeobox) span residues 759 to 818 (PSKV…KNGQ) and 830 to 889 (FPPG…TRAV). A disordered region spans residues 916 to 951 (SELSENSESWEPSAPEASSEPFDTSSPQSGRQLEAD). Low complexity predominate over residues 919-936 (SENSESWEPSAPEASSEP). S922 and S941 each carry phosphoserine. Polar residues predominate over residues 937-951 (FDTSSPQSGRQLEAD).

It belongs to the ZHX family. As to quaternary structure, homodimer (via homeobox domain 1). Heterodimer with ZHX1 (via homeobox domain 1). Heterodimer with ZHX2 (via homeobox domain 1). Heterodimerization with ZHX1 is a prerequisite for repressor activity. Interacts with NFYA. As to expression, ubiquitously expressed.

Its subcellular location is the nucleus. Functionally, acts as a transcriptional repressor. Involved in the early stages of mesenchymal stem cell (MSC) osteogenic differentiation. Is a regulator of podocyte gene expression during primary glomerula disease. Binds to promoter DNA. The chain is Zinc fingers and homeoboxes protein 3 (Zhx3) from Mus musculus (Mouse).